The sequence spans 688 residues: Translation initiation factor IF-2 (688 aa).

Positions 53 to 101 (GAEKPSVADEFEVEEKVVRSKKNSNKNKKKGKANEDKRQDNFAGRQQTP) are disordered. Positions 71-83 (RSKKNSNKNKKKG) are enriched in basic residues. The tr-type G domain occupies 190-359 (ERPAVVTIMG…LLVSEVEEYK (170 aa)). The G1 stretch occupies residues 199 to 206 (GHVDHGKT). 199-206 (GHVDHGKT) contributes to the GTP binding site. The interval 224–228 (GITQH) is G2. Residues 245–248 (DTPG) are G3. GTP contacts are provided by residues 245–249 (DTPGH) and 299–302 (NKMD). Positions 299 to 302 (NKMD) are G4. Positions 335 to 337 (SAI) are G5.

It belongs to the TRAFAC class translation factor GTPase superfamily. Classic translation factor GTPase family. IF-2 subfamily.

The protein localises to the cytoplasm. Its function is as follows. One of the essential components for the initiation of protein synthesis. Protects formylmethionyl-tRNA from spontaneous hydrolysis and promotes its binding to the 30S ribosomal subunits. Also involved in the hydrolysis of GTP during the formation of the 70S ribosomal complex. In Bacillus mycoides (strain KBAB4) (Bacillus weihenstephanensis), this protein is Translation initiation factor IF-2.